A 373-amino-acid chain; its full sequence is Queuine tRNA-ribosyltransferase (373 aa).

The active-site Proton acceptor is the Asp91. Substrate-binding positions include 91 to 95 (DSGGF), Asp145, and Gln187. Residues 245–251 (GVGTPED) form an RNA binding region. Asp264 serves as the catalytic Nucleophile. The RNA binding; important for wobble base 34 recognition stretch occupies residues 269–273 (TRNAR). The Zn(2+) site is built by Cys302, Cys304, Cys307, and His333.

Belongs to the queuine tRNA-ribosyltransferase family. Homodimer. Within each dimer, one monomer is responsible for RNA recognition and catalysis, while the other monomer binds to the replacement base PreQ1. The cofactor is Zn(2+).

The catalysed reaction is 7-aminomethyl-7-carbaguanine + guanosine(34) in tRNA = 7-aminomethyl-7-carbaguanosine(34) in tRNA + guanine. The protein operates within tRNA modification; tRNA-queuosine biosynthesis. Functionally, catalyzes the base-exchange of a guanine (G) residue with the queuine precursor 7-aminomethyl-7-deazaguanine (PreQ1) at position 34 (anticodon wobble position) in tRNAs with GU(N) anticodons (tRNA-Asp, -Asn, -His and -Tyr). Catalysis occurs through a double-displacement mechanism. The nucleophile active site attacks the C1' of nucleotide 34 to detach the guanine base from the RNA, forming a covalent enzyme-RNA intermediate. The proton acceptor active site deprotonates the incoming PreQ1, allowing a nucleophilic attack on the C1' of the ribose to form the product. After dissociation, two additional enzymatic reactions on the tRNA convert PreQ1 to queuine (Q), resulting in the hypermodified nucleoside queuosine (7-(((4,5-cis-dihydroxy-2-cyclopenten-1-yl)amino)methyl)-7-deazaguanosine). This is Queuine tRNA-ribosyltransferase from Syntrophobacter fumaroxidans (strain DSM 10017 / MPOB).